The sequence spans 147 residues: Large ribosomal subunit protein uL15 (147 aa).

A compositionally biased stretch (basic and acidic residues) spans 1–13; it reads MELHSLKAAEGSR. Residues 1 to 57 are disordered; sequence MELHSLKAAEGSRKVRNRVGRGTSSGNGKTSGRGQKGQKSRSGGGVRPGFEGGQTEL. Gly residues-rich tracts occupy residues 23-35 and 42-52; these read TSSG…GRGQ and SGGGVRPGFEG.

This sequence belongs to the universal ribosomal protein uL15 family. In terms of assembly, part of the 50S ribosomal subunit.

Functionally, binds to the 23S rRNA. This Lactococcus lactis subsp. lactis (strain IL1403) (Streptococcus lactis) protein is Large ribosomal subunit protein uL15.